Here is a 342-residue protein sequence, read N- to C-terminus: Probable RNA methyltransferase PST_2231 (342 aa).

Glu91 serves as the catalytic Proton acceptor. The Radical SAM core domain maps to 94-320 (LLPRDGLCVS…TKVRNSAGQD (227 aa)). Residues Cys101 and Cys325 are joined by a disulfide bond. [4Fe-4S] cluster is bound by residues Cys108, Cys112, and Cys115. S-adenosyl-L-methionine-binding positions include 153-154 (GE), Ser183, 206-208 (SLH), and Asn282. Cys325 serves as the catalytic S-methylcysteine intermediate.

Belongs to the radical SAM superfamily. RlmN family. Requires [4Fe-4S] cluster as cofactor.

The protein localises to the cytoplasm. The chain is Probable RNA methyltransferase PST_2231 from Stutzerimonas stutzeri (strain A1501) (Pseudomonas stutzeri).